The sequence spans 317 residues: Olfactory receptor 5K16 (317 aa).

Residues 1 to 28 (MEKTNHSLTTQFILVGFSDHPDLKTPLF) lie on the Extracellular side of the membrane. Asparagine 5 carries an N-linked (GlcNAc...) asparagine glycan. A helical transmembrane segment spans residues 29–49 (LLFSVIYLVTMVGNLGLVAVI). Topologically, residues 50–56 (YLEPRLH) are cytoplasmic. Residues 57–77 (TPMYIFLGNLALMDSCCSCAI) traverse the membrane as a helical segment. The Extracellular portion of the chain corresponds to 78–93 (TPKILENFFSVDRRIS). A helical transmembrane segment spans residues 94 to 114 (LYECMAQFYFLCLAETADCFL). An intrachain disulfide couples cysteine 97 to cysteine 189. Topologically, residues 115-144 (LAAMAYDRYVAICNPLQYHSMMSKKLSIQM) are cytoplasmic. The helical transmembrane segment at 145-165 (SIGTFITSNLHSLIHVGCLLR) threads the bilayer. The Extracellular segment spans residues 166–198 (LTFCKSNRIDHFFCDILPLYRLSCTDPFINELM). Residues 199–219 (IYIFSMPIQVFTITTVLVSYF) form a helical membrane-spanning segment. Topologically, residues 220-239 (CILLTIFKMKSKDGRGKAFS) are cytoplasmic. The chain crosses the membrane as a helical span at residues 240–259 (TCASHFFSVSIFYVCLLMYI). The Extracellular portion of the chain corresponds to 260–268 (RPFDEGNKD). Residues 269 to 289 (IPVAVFYTIIIPLLNPFIYSL) form a helical membrane-spanning segment. The Cytoplasmic segment spans residues 290–317 (RNKEVVNAVKKVMKTHSIFKNASASMAR).

This sequence belongs to the G-protein coupled receptor 1 family.

The protein resides in the cell membrane. Its function is as follows. Potential odorant receptor. This chain is Olfactory receptor 5K16, found in Mus musculus (Mouse).